Consider the following 417-residue polypeptide: Serpin H1 (417 aa).

A signal peptide spans M1–A18. An N6-succinyllysine modification is found at K94. 2 N-linked (GlcNAc...) asparagine glycosylation sites follow: N120 and N125. S141 is subject to Phosphoserine. Residue K206 is modified to N6-acetyllysine. N6-succinyllysine is present on K295. K318 is subject to N6-acetyllysine. The Prevents secretion from ER motif lies at R414 to L417.

It belongs to the serpin family.

Its subcellular location is the endoplasmic reticulum lumen. Its function is as follows. Binds specifically to collagen. Could be involved as a chaperone in the biosynthetic pathway of collagen. This chain is Serpin H1 (SERPINH1), found in Pongo abelii (Sumatran orangutan).